We begin with the raw amino-acid sequence, 933 residues long: Dual 3',5'-cyclic-AMP and -GMP phosphodiesterase 11A (933 aa).

Positions 42–121 (HTSGQGASSL…LQRRASQKEL (80 aa)) are disordered. Phosphoserine is present on residues Ser-162, Ser-163, and Ser-239. GAF domains lie at 217–370 (DLTS…GIAI) and 402–558 (DLEK…GLGI). Ser-424 provides a ligand contact to 3',5'-cyclic GMP. Positions 588-912 (SKAEVDKFKA…RKWEELHQKR (325 aa)) constitute a PDEase domain. Residue His-664 is the Proton donor of the active site. A divalent metal cation is bound by residues His-668, His-704, Asp-705, and Asp-816. The disordered stretch occupies residues 913-933 (LQVSAASPDPASPMVAGEDRL).

Belongs to the cyclic nucleotide phosphodiesterase family. A divalent metal cation is required as a cofactor. As to expression, expressed in testis and developing spermatoza.

The protein localises to the cytoplasm. It is found in the cytosol. The enzyme catalyses 3',5'-cyclic GMP + H2O = GMP + H(+). It carries out the reaction 3',5'-cyclic AMP + H2O = AMP + H(+). Its activity is regulated as follows. Inhibited by 3-isobutyl-1-methylxanthine (IBMX), zaprinast and dipyridamole. cGMP acts as an allosteric activator. Functionally, plays a role in signal transduction by regulating the intracellular concentration of cyclic nucleotides cAMP and cGMP. Catalyzes the hydrolysis of both cAMP and cGMP to 5'-AMP and 5'-GMP, respectively. This Mus musculus (Mouse) protein is Dual 3',5'-cyclic-AMP and -GMP phosphodiesterase 11A (Pde11a).